A 146-amino-acid chain; its full sequence is Snake venom vascular endothelial growth factor toxin (146 aa).

Residues Met1 to Gly24 form the signal peptide. Gln25 is modified (pyrrolidone carboxylic acid). Disulfide bonds link Cys38–Cys80, Cys69–Cys115, and Cys73–Cys117. The interval Arg118–Val146 is disordered. Positions Asn133–Val146 are enriched in basic and acidic residues.

Belongs to the PDGF/VEGF growth factor family. Snake venom VEGF subfamily. Homodimer; disulfide-linked. Interacts with VEGF receptor-1 (FLT1) with a high affinity, whereas it binds to VEGF receptor-2 (KDR) with a low affinity. Does not bind VEGF receptor-3 (FLT4). As to expression, expressed by the venom gland.

It is found in the secreted. Its function is as follows. Snake venom VEGFs that may contribute to venom dispersion and prey subjugation by inducing vascular permeability and hypotension. This protein induces an increase in capillary permeability after intradermal injection, as well as a drastic hypotensive effect after intravenous injection. The hypotension is mediated by nitric oxide (NO), which is produced by VEGF-activated endothelium NO synthase. Also induces angiogenesis in vitro. Like other crotalid VEGFs, this protein interacts with VEGF receptor-1 (FLT1) with a high affinity, whereas it binds to VEGF receptor-2 (KDR) with a low affinity. The protein is Snake venom vascular endothelial growth factor toxin of Bothrops jararaca (Jararaca).